Consider the following 300-residue polypeptide: Ribonuclease HIII (300 aa).

Residues 86 to 300 enclose the RNase H type-2 domain; it reads RPRLGVDESG…FNEICDSASA (215 aa). A divalent metal cation is bound by residues Asp-92, Glu-93, and Asp-196.

The protein belongs to the RNase HII family. RnhC subfamily. Mn(2+) is required as a cofactor. The cofactor is Mg(2+).

The protein localises to the cytoplasm. It catalyses the reaction Endonucleolytic cleavage to 5'-phosphomonoester.. Functionally, endonuclease that specifically degrades the RNA of RNA-DNA hybrids. The polypeptide is Ribonuclease HIII (Chlamydia felis (strain Fe/C-56) (Chlamydophila felis)).